We begin with the raw amino-acid sequence, 247 residues long: UPF0280 protein MmarC6_1437 (247 aa).

It belongs to the UPF0280 family.

The sequence is that of UPF0280 protein MmarC6_1437 from Methanococcus maripaludis (strain C6 / ATCC BAA-1332).